A 402-amino-acid polypeptide reads, in one-letter code: 4-hydroxy-3-methylbut-2-en-1-yl diphosphate synthase (ferredoxin) (402 aa).

[4Fe-4S] cluster is bound by residues C311, C314, C345, and E352.

Belongs to the IspG family. [4Fe-4S] cluster serves as cofactor.

The enzyme catalyses (2E)-4-hydroxy-3-methylbut-2-enyl diphosphate + 2 oxidized [2Fe-2S]-[ferredoxin] + H2O = 2-C-methyl-D-erythritol 2,4-cyclic diphosphate + 2 reduced [2Fe-2S]-[ferredoxin] + H(+). The protein operates within isoprenoid biosynthesis; isopentenyl diphosphate biosynthesis via DXP pathway; isopentenyl diphosphate from 1-deoxy-D-xylulose 5-phosphate: step 5/6. Converts 2C-methyl-D-erythritol 2,4-cyclodiphosphate (ME-2,4cPP) into 1-hydroxy-2-methyl-2-(E)-butenyl 4-diphosphate, using ferredoxin I (PetF) as the reducing agent. The sequence is that of 4-hydroxy-3-methylbut-2-en-1-yl diphosphate synthase (ferredoxin) from Thermosynechococcus vestitus (strain NIES-2133 / IAM M-273 / BP-1).